The chain runs to 263 residues: MGQTALAGGSSSTPTPQALYPDLSCPEGLEELLSAPPPDLGAQRRHGWNPKDCSENIEVKEGGLYFERRPVAQSTDGARGKRGYSRGLHAWEISWPLEQRGTHAVVGVATALAPLQTDHYAALLGSNSESWGWDIGRGKLYHQSKGPGAPQYPAGTQGEQLEVPERLLVVLDMEEGTLGYAIGGTYLGPAFRGLKGRTLYPAVSAVWGQCQVRIRYLGERRAEPHSLLHLSRLCVRHNLGDTRLGQVSALPLPPAMKRYLLYQ.

Positions M1–P16 are enriched in polar residues. The disordered stretch occupies residues M1–W48. Positions P26 to R221 constitute a B30.2/SPRY domain. The 42-residue stretch at A222 to Q263 folds into the SOCS box domain.

Belongs to the SPSB family. In terms of assembly, component of the probable ECS(SPSB2) E3 ubiquitin-protein ligase complex which contains CUL5, RNF7/RBX2, Elongin BC complex and SPSB2. Interacts with CUL5, RNF7, ELOB and ELOC. Interacts with MET. Interacts (via B30.2/SPRY domain) with PAWR; this interaction occurs in association with the Elongin BC complex. Interacts with NOS2. As to quaternary structure, (Microbial infection) Interacts (via C-terminus) with HCV envelope glycoprotein E1. Interacts (via C-terminus) with HCV non-structural protein 5A; this interaction targets NS5A for ubiquitination and degradation.

Its subcellular location is the cytoplasm. The protein resides in the cytosol. The protein operates within protein modification; protein ubiquitination. In terms of biological role, substrate recognition component of a SCF-like ECS (Elongin BC-CUL2/5-SOCS-box protein) E3 ubiquitin-protein ligase complex which mediates the ubiquitination and subsequent proteasomal degradation of target proteins. Negatively regulates nitric oxide (NO) production and limits cellular toxicity in activated macrophages by mediating the ubiquitination and proteasomal degradation of NOS2. Acts as a bridge which links NOS2 with the ECS E3 ubiquitin ligase complex components ELOC and CUL5. The sequence is that of SPRY domain-containing SOCS box protein 2 (SPSB2) from Homo sapiens (Human).